Reading from the N-terminus, the 369-residue chain is Probable dual-specificity RNA methyltransferase RlmN (369 aa).

The active-site Proton acceptor is the Glu-108. Positions Tyr-114–Glu-352 constitute a Radical SAM core domain. Cys-121 and Cys-357 are oxidised to a cystine. [4Fe-4S] cluster contacts are provided by Cys-128, Cys-132, and Cys-135. S-adenosyl-L-methionine is bound by residues Gly-178–Glu-179, Ser-212, Ser-235–His-237, and Asn-314. Cys-357 functions as the S-methylcysteine intermediate in the catalytic mechanism.

This sequence belongs to the radical SAM superfamily. RlmN family. [4Fe-4S] cluster serves as cofactor.

It localises to the cytoplasm. The catalysed reaction is adenosine(2503) in 23S rRNA + 2 reduced [2Fe-2S]-[ferredoxin] + 2 S-adenosyl-L-methionine = 2-methyladenosine(2503) in 23S rRNA + 5'-deoxyadenosine + L-methionine + 2 oxidized [2Fe-2S]-[ferredoxin] + S-adenosyl-L-homocysteine. It catalyses the reaction adenosine(37) in tRNA + 2 reduced [2Fe-2S]-[ferredoxin] + 2 S-adenosyl-L-methionine = 2-methyladenosine(37) in tRNA + 5'-deoxyadenosine + L-methionine + 2 oxidized [2Fe-2S]-[ferredoxin] + S-adenosyl-L-homocysteine. Specifically methylates position 2 of adenine 2503 in 23S rRNA and position 2 of adenine 37 in tRNAs. This Corynebacterium efficiens (strain DSM 44549 / YS-314 / AJ 12310 / JCM 11189 / NBRC 100395) protein is Probable dual-specificity RNA methyltransferase RlmN.